Here is a 187-residue protein sequence, read N- to C-terminus: Probable cobalt-precorrin-6B C(15)-methyltransferase (decarboxylating) (187 aa).

Residues Thr-17, 41–45, Asp-62, and Gly-91 contribute to the S-adenosyl-L-methionine site; that span reads GCGTG.

It belongs to the methyltransferase superfamily. Archaeal-type CbiT family.

It catalyses the reaction Co-precorrin-6B + S-adenosyl-L-methionine = Co-precorrin-7 + S-adenosyl-L-homocysteine + CO2. It functions in the pathway cofactor biosynthesis; adenosylcobalamin biosynthesis; cob(II)yrinate a,c-diamide from sirohydrochlorin (anaerobic route): step 8/10. In terms of biological role, catalyzes the methylation of C-15 in cobalt-precorrin-6B followed by the decarboxylation of C-12 to form cobalt-precorrin-7. This chain is Probable cobalt-precorrin-6B C(15)-methyltransferase (decarboxylating), found in Methanobrevibacter smithii (strain ATCC 35061 / DSM 861 / OCM 144 / PS).